A 319-amino-acid polypeptide reads, in one-letter code: Glucokinase (319 aa).

Residue 8 to 13 (GDIGGT) coordinates ATP.

The protein belongs to the bacterial glucokinase family.

It localises to the cytoplasm. The catalysed reaction is D-glucose + ATP = D-glucose 6-phosphate + ADP + H(+). This chain is Glucokinase, found in Chromohalobacter salexigens (strain ATCC BAA-138 / DSM 3043 / CIP 106854 / NCIMB 13768 / 1H11).